Reading from the N-terminus, the 404-residue chain is Probable tRNA sulfurtransferase (404 aa).

Residues 60 to 165 (QPIVEALKLV…DEAAYISYEE (106 aa)) enclose the THUMP domain. Residues 183 to 184 (ML), 208 to 209 (HF), Arg-265, Gly-287, and Gln-296 contribute to the ATP site.

Belongs to the ThiI family.

It is found in the cytoplasm. The catalysed reaction is [ThiI sulfur-carrier protein]-S-sulfanyl-L-cysteine + a uridine in tRNA + 2 reduced [2Fe-2S]-[ferredoxin] + ATP + H(+) = [ThiI sulfur-carrier protein]-L-cysteine + a 4-thiouridine in tRNA + 2 oxidized [2Fe-2S]-[ferredoxin] + AMP + diphosphate. It carries out the reaction [ThiS sulfur-carrier protein]-C-terminal Gly-Gly-AMP + S-sulfanyl-L-cysteinyl-[cysteine desulfurase] + AH2 = [ThiS sulfur-carrier protein]-C-terminal-Gly-aminoethanethioate + L-cysteinyl-[cysteine desulfurase] + A + AMP + 2 H(+). The protein operates within cofactor biosynthesis; thiamine diphosphate biosynthesis. Its function is as follows. Catalyzes the ATP-dependent transfer of a sulfur to tRNA to produce 4-thiouridine in position 8 of tRNAs, which functions as a near-UV photosensor. Also catalyzes the transfer of sulfur to the sulfur carrier protein ThiS, forming ThiS-thiocarboxylate. This is a step in the synthesis of thiazole, in the thiamine biosynthesis pathway. The sulfur is donated as persulfide by IscS. This chain is Probable tRNA sulfurtransferase, found in Streptococcus pyogenes serotype M49 (strain NZ131).